The sequence spans 780 residues: Acetyl-CoA decarbonylase/synthase complex subunit alpha (780 aa).

[4Fe-4S] cluster contacts are provided by Cys-73, Cys-76, Cys-77, Cys-79, Cys-84, and Cys-93. His-116 contacts CO. 3 residues coordinate [Ni-4Fe-4S] cluster: His-250, Cys-278, and Cys-317. 4Fe-4S ferredoxin-type domains are found at residues 399–429 (IDEI…MDAV) and 440–469 (LEEM…VSMV). Cys-409, Cys-412, Cys-415, Cys-419, Cys-449, Cys-452, Cys-455, and Cys-459 together coordinate [4Fe-4S] cluster. [Ni-4Fe-4S] cluster contacts are provided by Cys-517, Cys-546, and Cys-581.

This sequence belongs to the Ni-containing carbon monoxide dehydrogenase family. Heterotetramer of two alpha and two epsilon subunits. The ACDS complex is made up of alpha, epsilon, beta, gamma and delta subunits with a probable stoichiometry of (alpha(2)epsilon(2))(4)-beta(8)-(gamma(1)delta(1))(8). [4Fe-4S] cluster is required as a cofactor. [Ni-4Fe-4S] cluster serves as cofactor.

The catalysed reaction is CO + 2 oxidized [2Fe-2S]-[ferredoxin] + H2O = 2 reduced [2Fe-2S]-[ferredoxin] + CO2 + 2 H(+). Its function is as follows. Part of the ACDS complex that catalyzes the reversible cleavage of acetyl-CoA, allowing autotrophic growth from CO(2). The alpha-epsilon subcomponent functions as a carbon monoxide dehydrogenase. In Methanothermobacter thermautotrophicus (strain ATCC 29096 / DSM 1053 / JCM 10044 / NBRC 100330 / Delta H) (Methanobacterium thermoautotrophicum), this protein is Acetyl-CoA decarbonylase/synthase complex subunit alpha.